The primary structure comprises 393 residues: Tryptophan 2,3-dioxygenase (393 aa).

Residues Phe-56–His-60 and Arg-127 contribute to the substrate site. A heme-binding site is contributed by His-312. Thr-327 contacts substrate.

This sequence belongs to the tryptophan 2,3-dioxygenase family. Homotetramer. Dimer of dimers. Heme serves as cofactor.

The catalysed reaction is L-tryptophan + O2 = N-formyl-L-kynurenine. Its pathway is amino-acid degradation; L-tryptophan degradation via kynurenine pathway; L-kynurenine from L-tryptophan: step 1/2. It functions in the pathway pigment biosynthesis; ommochrome biosynthesis. With respect to regulation, stimulated by low concentrations of hydrogen peroxide (5 uM), ascorbate (0.1-0.3 mM), and sodium hydrosulfite (0.1 mM). Inhibited by high concentrations of hydrogen peroxide (0.1 mM), ascorbate (10 mM), and sodium hydrosulfite (1 mM). Heme-dependent dioxygenase that catalyzes the oxidative cleavage of the L-tryptophan (L-Trp) pyrrole ring and converts L-tryptophan to N-formyl-L-kynurenine. Catalyzes the oxidative cleavage of the indole moiety. This Aedes aegypti (Yellowfever mosquito) protein is Tryptophan 2,3-dioxygenase.